The following is a 138-amino-acid chain: Large ribosomal subunit protein uL16 (138 aa).

Residues 1–16 (MLIPRKVAHRKQHHPG) show a composition bias toward basic residues. The disordered stretch occupies residues 1–24 (MLIPRKVAHRKQHHPGRTGAAKGG).

This sequence belongs to the universal ribosomal protein uL16 family. As to quaternary structure, part of the 50S ribosomal subunit.

Binds 23S rRNA and is also seen to make contacts with the A and possibly P site tRNAs. This Frankia alni (strain DSM 45986 / CECT 9034 / ACN14a) protein is Large ribosomal subunit protein uL16.